Here is a 626-residue protein sequence, read N- to C-terminus: MAPFLSAHGESASSSSSSSPTPSRHTRNQHVDYSTPGSTGYNIPQNTTWNAPSNRKIRVLTIGAGISGILMAYQLQKHCENVEHVVYEKNEDVGGTWLENRYPRAGCDIPSHAYTYQFALNPDWPRFFSFAPDIWAYLNKVCETFDLKKYMRFHVEVVGCYWQEHAGEWVVKLREHLPNHEVREFEDRCNVLLYGAGVLNNFKFPDIPGLQDRFKGRVIHTARWPKDYKEEDWAKERVAVIGSGASSIQTVPGMQPYAKHLDIFVRTGVWFGVIAGNSGSQAKEYSEEERENFRRDPKAVVAHAREIEEQVNGMWGGFYAGSMGQKMGSGYFRTRMAEHIKDERLLQGFSPKFGLGCRRITPGDPYMEAIQKENVDVHFTPVESCTEKGVVGGDGVEREVDTVICATGFDVSYRPRFPVIGKDGVDLREKWDLCPESYLGLAIPDMPNFLTFIGPTWPIENGSVMAPLHSVSEYAIQLIKRMQNENIRSWVPRQDITDSFNDHVQEWIKHTVWKDDCRSWYKNNETGRVNAIWPGSSLHYQQVIERPRYEDFEIHSFNDNPWAHLGMGWTVQDRKGPKEEDVCPYFNVKNIDPKWYEACGGDSRLLVERPEESSQAGQQFLWPTGT.

Over residues 1–23 the composition is skewed to low complexity; that stretch reads MAPFLSAHGESASSSSSSSPTPS. The tract at residues 1 to 47 is disordered; sequence MAPFLSAHGESASSSSSSSPTPSRHTRNQHVDYSTPGSTGYNIPQNT. Residues 31 to 47 show a composition bias toward polar residues; it reads VDYSTPGSTGYNIPQNT. Residues 96–99, 108–109, and Y114 contribute to the FAD site; these read TWLE and DI. 106–108 is an NADP(+) binding site; sequence GCD. NADP(+)-binding positions include 243 to 249 and 266 to 267; these read SGASSIQ and RT.

Belongs to the FAD-binding monooxygenase family. It depends on FAD as a cofactor.

It participates in mycotoxin biosynthesis. In terms of biological role, FAD-binding monooxygenase; part of the fragmented gene cluster that mediates the biosynthesis of dothistromin (DOTH), a polyketide toxin very similar in structure to the aflatoxin precursor, versicolorin B. The first step of the pathway is the conversion of acetate to norsolorinic acid (NOR) and requires the fatty acid synthase subunits hexA and hexB, as well as the polyketide synthase pksA. PksA combines a hexanoyl starter unit and 7 malonyl-CoA extender units to synthesize the precursor NOR. The hexanoyl starter unit is provided to the acyl-carrier protein (ACP) domain by the fungal fatty acid synthase hexA/hexB. The second step is the conversion of NOR to averantin (AVN) and requires the norsolorinic acid ketoreductase nor1, which catalyzes the dehydration of norsolorinic acid to form (1'S)-averantin. The cytochrome P450 monooxygenase avnA then catalyzes the hydroxylation of AVN to 5'hydroxyaverantin (HAVN). The next step is performed by adhA that transforms HAVN to averufin (AVF). Averufin might then be converted to hydroxyversicolorone by cypX and avfA. Hydroxyversicolorone is further converted versiconal hemiacetal acetate (VHA) by moxY. VHA is then the substrate for the versiconal hemiacetal acetate esterase est1 to yield versiconal (VAL). Versicolorin B synthase vbsA then converts VAL to versicolorin B (VERB) by closing the bisfuran ring. Then, the activity of the versicolorin B desaturase verB leads to versicolorin A (VERA). DotB, a predicted chloroperoxidase, may perform epoxidation of the A-ring of VERA. Alternatively, a cytochrome P450, such as cypX or avnA could catalyze this step. It is also possible that another, uncharacterized, cytochrome P450 enzyme is responsible for this step. Opening of the epoxide could potentially be achieved by the epoxide hydrolase epoA. However, epoA seems not to be required for DOTH biosynthesis, but other epoxide hydrolases may have the ability to complement this hydrolysis. Alternatively, opening of the epoxide ring could be achieved non-enzymatically. The next step is the deoxygenation of ring A to yield the 5,8-dihydroxyanthraquinone which is most likely catalyzed by the NADPH dehydrogenase encoded by ver1. The last stages of DOTH biosynthesis are proposed to involve hydroxylation of the bisfuran. OrdB and norB might have oxidative roles here. An alternative possibility is that cytochrome P450 monoogenases such as avnA and cypX might perform these steps in addition to previously proposed steps. This is FAD-binding monooxygenase moxY from Dothistroma septosporum (Red band needle blight fungus).